The sequence spans 216 residues: Adenylate kinase (216 aa).

10–15 (GAGKGT) lines the ATP pocket. The NMP stretch occupies residues 30–59 (STGDMFRAAMKNETALGLEAKSYIDKGELV). AMP contacts are provided by residues Thr31, Arg36, 57 to 59 (ELV), 85 to 88 (GFPR), and Gln92. An LID region spans residues 126 to 164 (GRFICRTCGATYHKLFNPPKVEGTCDRCGGHEFYQREDD). Arg127 is an ATP binding site. The Zn(2+) site is built by Cys130 and Cys133. 136–137 (TY) is a binding site for ATP. Zn(2+) is bound by residues Cys150 and Cys153. AMP is bound by residues Arg161 and Arg172. Residue Arg200 coordinates ATP.

The protein belongs to the adenylate kinase family. As to quaternary structure, monomer.

The protein localises to the cytoplasm. The catalysed reaction is AMP + ATP = 2 ADP. Its pathway is purine metabolism; AMP biosynthesis via salvage pathway; AMP from ADP: step 1/1. Its function is as follows. Catalyzes the reversible transfer of the terminal phosphate group between ATP and AMP. Plays an important role in cellular energy homeostasis and in adenine nucleotide metabolism. This chain is Adenylate kinase, found in Enterococcus faecalis (strain ATCC 700802 / V583).